The chain runs to 358 residues: Phospho-N-acetylmuramoyl-pentapeptide-transferase (358 aa).

10 helical membrane passes run 24 to 44 (FRSI…GPWV), 73 to 93 (TMGG…WADL), 95 to 115 (NVFI…GFVD), 134 to 154 (MFWQ…LPGF), 169 to 189 (ELGI…SNAV), 197 to 217 (GLAI…CYIA), 233 to 253 (GAGE…GFLW), 261 to 281 (VFMG…LAVL), 286 to 306 (ILLV…IFQV), and 335 to 355 (KIIV…ISTL).

This sequence belongs to the glycosyltransferase 4 family. MraY subfamily. Requires Mg(2+) as cofactor.

It is found in the cell inner membrane. It catalyses the reaction UDP-N-acetyl-alpha-D-muramoyl-L-alanyl-gamma-D-glutamyl-meso-2,6-diaminopimeloyl-D-alanyl-D-alanine + di-trans,octa-cis-undecaprenyl phosphate = di-trans,octa-cis-undecaprenyl diphospho-N-acetyl-alpha-D-muramoyl-L-alanyl-D-glutamyl-meso-2,6-diaminopimeloyl-D-alanyl-D-alanine + UMP. The protein operates within cell wall biogenesis; peptidoglycan biosynthesis. Functionally, catalyzes the initial step of the lipid cycle reactions in the biosynthesis of the cell wall peptidoglycan: transfers peptidoglycan precursor phospho-MurNAc-pentapeptide from UDP-MurNAc-pentapeptide onto the lipid carrier undecaprenyl phosphate, yielding undecaprenyl-pyrophosphoryl-MurNAc-pentapeptide, known as lipid I. This is Phospho-N-acetylmuramoyl-pentapeptide-transferase from Citrifermentans bemidjiense (strain ATCC BAA-1014 / DSM 16622 / JCM 12645 / Bem) (Geobacter bemidjiensis).